A 248-amino-acid chain; its full sequence is 3-oxoacyl-[acyl-carrier-protein] reductase FabG (248 aa).

NADP(+)-binding positions include 14-17 (GGSR), 64-65 (DV), and Asn91. Ser143 serves as a coordination point for substrate. Residue Tyr156 is the Proton acceptor of the active site. NADP(+) contacts are provided by residues 156 to 160 (YAAAK) and Ile189.

The protein belongs to the short-chain dehydrogenases/reductases (SDR) family. In terms of assembly, homotetramer.

The enzyme catalyses a (3R)-hydroxyacyl-[ACP] + NADP(+) = a 3-oxoacyl-[ACP] + NADPH + H(+). It participates in lipid metabolism; fatty acid biosynthesis. Catalyzes the NADPH-dependent reduction of beta-ketoacyl-ACP substrates to beta-hydroxyacyl-ACP products, the first reductive step in the elongation cycle of fatty acid biosynthesis. This is 3-oxoacyl-[acyl-carrier-protein] reductase FabG (fabG) from Chlamydia pneumoniae (Chlamydophila pneumoniae).